The chain runs to 192 residues: Xanthine phosphoribosyltransferase (192 aa).

The xanthine site is built by Leu-20 and Asn-27. 128–132 (ANGQA) is a 5-phospho-alpha-D-ribose 1-diphosphate binding site. Lys-156 lines the xanthine pocket.

The protein belongs to the purine/pyrimidine phosphoribosyltransferase family. Xpt subfamily. In terms of assembly, homodimer.

It is found in the cytoplasm. It catalyses the reaction XMP + diphosphate = xanthine + 5-phospho-alpha-D-ribose 1-diphosphate. It participates in purine metabolism; XMP biosynthesis via salvage pathway; XMP from xanthine: step 1/1. Its function is as follows. Converts the preformed base xanthine, a product of nucleic acid breakdown, to xanthosine 5'-monophosphate (XMP), so it can be reused for RNA or DNA synthesis. The protein is Xanthine phosphoribosyltransferase of Listeria innocua serovar 6a (strain ATCC BAA-680 / CLIP 11262).